We begin with the raw amino-acid sequence, 121 residues long: Small ribosomal subunit protein uS13 (121 aa).

Positions 91–121 are disordered; that stretch reads HRMSLPVRGQRTRTNARTRRGSRKTVAGRKK. Residues 100–121 show a composition bias toward basic residues; the sequence is QRTRTNARTRRGSRKTVAGRKK.

It belongs to the universal ribosomal protein uS13 family. As to quaternary structure, part of the 30S ribosomal subunit. Forms a loose heterodimer with protein S19. Forms two bridges to the 50S subunit in the 70S ribosome.

Located at the top of the head of the 30S subunit, it contacts several helices of the 16S rRNA. In the 70S ribosome it contacts the 23S rRNA (bridge B1a) and protein L5 of the 50S subunit (bridge B1b), connecting the 2 subunits; these bridges are implicated in subunit movement. Contacts the tRNAs in the A and P-sites. The chain is Small ribosomal subunit protein uS13 from Prochlorococcus marinus (strain AS9601).